A 147-amino-acid polypeptide reads, in one-letter code: Hemoglobin subunit beta-H0 (147 aa).

The 145-residue stretch at 3-147 (HFTAEEKAAI…VATALSHKYH (145 aa)) folds into the Globin domain. Heme b is bound by residues H64 and H93.

This sequence belongs to the globin family. As to quaternary structure, heterotetramer of two alpha chains and two beta chains. In terms of tissue distribution, red blood cells.

Its function is as follows. This is a minor early embryonic beta chain. This chain is Hemoglobin subunit beta-H0 (Hbb-bh0), found in Mus musculus (Mouse).